A 170-amino-acid chain; its full sequence is Peptide deformylase (170 aa).

The Fe cation site is built by Cys94 and His136. Glu137 is an active-site residue. Residue His140 coordinates Fe cation.

This sequence belongs to the polypeptide deformylase family. Fe(2+) is required as a cofactor.

The catalysed reaction is N-terminal N-formyl-L-methionyl-[peptide] + H2O = N-terminal L-methionyl-[peptide] + formate. Its function is as follows. Removes the formyl group from the N-terminal Met of newly synthesized proteins. Requires at least a dipeptide for an efficient rate of reaction. N-terminal L-methionine is a prerequisite for activity but the enzyme has broad specificity at other positions. The polypeptide is Peptide deformylase (Xylella fastidiosa (strain 9a5c)).